The following is a 397-amino-acid chain: Succinate--CoA ligase [ADP-forming] subunit beta (397 aa).

The 246-residue stretch at 9-254 (KALLKSFGAP…KSEEDEKEIQ (246 aa)) folds into the ATP-grasp domain. Residues lysine 46, 53 to 55 (GRG), glutamate 109, alanine 112, and glutamate 117 each bind ATP. Residues asparagine 209 and aspartate 223 each coordinate Mg(2+). Substrate is bound by residues asparagine 274 and 331 to 333 (GIM).

It belongs to the succinate/malate CoA ligase beta subunit family. As to quaternary structure, heterotetramer of two alpha and two beta subunits. Requires Mg(2+) as cofactor.

The enzyme catalyses succinate + ATP + CoA = succinyl-CoA + ADP + phosphate. It catalyses the reaction GTP + succinate + CoA = succinyl-CoA + GDP + phosphate. The protein operates within carbohydrate metabolism; tricarboxylic acid cycle; succinate from succinyl-CoA (ligase route): step 1/1. Its function is as follows. Succinyl-CoA synthetase functions in the citric acid cycle (TCA), coupling the hydrolysis of succinyl-CoA to the synthesis of either ATP or GTP and thus represents the only step of substrate-level phosphorylation in the TCA. The beta subunit provides nucleotide specificity of the enzyme and binds the substrate succinate, while the binding sites for coenzyme A and phosphate are found in the alpha subunit. This Rhizobium rhizogenes (strain K84 / ATCC BAA-868) (Agrobacterium radiobacter) protein is Succinate--CoA ligase [ADP-forming] subunit beta.